Reading from the N-terminus, the 229-residue chain is Lipoprotein-releasing system ATP-binding protein LolD (229 aa).

Residues 6 to 226 (LELKSVDRHY…TLSDGRVVEL (221 aa)) form the ABC transporter domain. 42–49 (APSGTGKS) lines the ATP pocket.

It belongs to the ABC transporter superfamily. Lipoprotein translocase (TC 3.A.1.125) family. As to quaternary structure, the complex is composed of two ATP-binding proteins (LolD) and two transmembrane proteins (LolC and LolE).

The protein resides in the cell inner membrane. Part of the ABC transporter complex LolCDE involved in the translocation of mature outer membrane-directed lipoproteins, from the inner membrane to the periplasmic chaperone, LolA. Responsible for the formation of the LolA-lipoprotein complex in an ATP-dependent manner. In Chelativorans sp. (strain BNC1), this protein is Lipoprotein-releasing system ATP-binding protein LolD.